Consider the following 418-residue polypeptide: Gamma-glutamyl phosphate reductase (418 aa).

This sequence belongs to the gamma-glutamyl phosphate reductase family.

It is found in the cytoplasm. It catalyses the reaction L-glutamate 5-semialdehyde + phosphate + NADP(+) = L-glutamyl 5-phosphate + NADPH + H(+). It functions in the pathway amino-acid biosynthesis; L-proline biosynthesis; L-glutamate 5-semialdehyde from L-glutamate: step 2/2. Functionally, catalyzes the NADPH-dependent reduction of L-glutamate 5-phosphate into L-glutamate 5-semialdehyde and phosphate. The product spontaneously undergoes cyclization to form 1-pyrroline-5-carboxylate. The chain is Gamma-glutamyl phosphate reductase from Aliivibrio fischeri (strain MJ11) (Vibrio fischeri).